We begin with the raw amino-acid sequence, 461 residues long: Argininosuccinate lyase (461 aa).

It belongs to the lyase 1 family. Argininosuccinate lyase subfamily.

It is found in the cytoplasm. The catalysed reaction is 2-(N(omega)-L-arginino)succinate = fumarate + L-arginine. The protein operates within amino-acid biosynthesis; L-arginine biosynthesis; L-arginine from L-ornithine and carbamoyl phosphate: step 3/3. This is Argininosuccinate lyase from Dehalococcoides mccartyi (strain ATCC BAA-2266 / KCTC 15142 / 195) (Dehalococcoides ethenogenes (strain 195)).